We begin with the raw amino-acid sequence, 276 residues long: Diaminopimelate epimerase (276 aa).

Residues N13, Q46, and N66 each coordinate substrate. The Proton donor role is filled by C75. Substrate-binding positions include 76–77 (GN), N159, N192, and 210–211 (ER). C219 functions as the Proton acceptor in the catalytic mechanism. Substrate is bound at residue 220 to 221 (GT).

The protein belongs to the diaminopimelate epimerase family. Homodimer.

It is found in the cytoplasm. It catalyses the reaction (2S,6S)-2,6-diaminopimelate = meso-2,6-diaminopimelate. It participates in amino-acid biosynthesis; L-lysine biosynthesis via DAP pathway; DL-2,6-diaminopimelate from LL-2,6-diaminopimelate: step 1/1. Functionally, catalyzes the stereoinversion of LL-2,6-diaminopimelate (L,L-DAP) to meso-diaminopimelate (meso-DAP), a precursor of L-lysine and an essential component of the bacterial peptidoglycan. The chain is Diaminopimelate epimerase from Tolumonas auensis (strain DSM 9187 / NBRC 110442 / TA 4).